The chain runs to 202 residues: Polyamine-modulated factor 1 (202 aa).

A compositionally biased stretch (basic and acidic residues) spans 1-15 (MAEVSRDSEAAERGP). Residues 1-26 (MAEVSRDSEAAERGPEGSSPEAVPGD) are disordered. Positions 153-194 (EAKNQELADAVLAGRRQVEELQQQVRALQQTWQALHREQREL) form a coiled coil.

Component of the MIS12 complex composed of MIS12, DSN1, NSL1 and PMF1. Interacts with COPS7A. Interacts via its coiled-coil domain with the leucine-zipper domain of NFE2L2. The interaction with NFE2L2 is required for the transcriptional regulation of SSAT.

It localises to the nucleus. The protein localises to the chromosome. Its subcellular location is the centromere. It is found in the kinetochore. Part of the MIS12 complex which is required for normal chromosome alignment and segregation and for kinetochore formation during mitosis. May act as a cotranscription partner of NFE2L2 involved in regulation of polyamine-induced transcription of SSAT. The polypeptide is Polyamine-modulated factor 1 (Mus musculus (Mouse)).